We begin with the raw amino-acid sequence, 63 residues long: MRCLPVFVILLLLIASAPSVDAQPKTKDDIPQASFLDNAKRYLQVLESKRNCCRRQICCGRTK.

The signal sequence occupies residues 1-22; it reads MRCLPVFVILLLLIASAPSVDA. Positions 23-48 are excised as a propeptide; sequence QPKTKDDIPQASFLDNAKRYLQVLES.

The protein belongs to the conotoxin T superfamily. Post-translationally, contains 2 disulfide bonds that can be either 'C1-C3, C2-C4' or 'C1-C4, C2-C3', since these disulfide connectivities have been observed for conotoxins with cysteine framework V (for examples, see AC P0DQQ7 and AC P81755). As to expression, expressed by the venom duct.

The protein localises to the secreted. This is Conotoxin TeAr193 from Conus textile (Cloth-of-gold cone).